We begin with the raw amino-acid sequence, 82 residues long: Small ribosomal subunit protein bS16 (82 aa).

Belongs to the bacterial ribosomal protein bS16 family.

In Microcystis aeruginosa (strain NIES-843 / IAM M-2473), this protein is Small ribosomal subunit protein bS16.